Here is a 197-residue protein sequence, read N- to C-terminus: Recombination protein RecR (197 aa).

The C4-type zinc finger occupies 56-71 (CRLCNNFSEAEVCEVC). The 96-residue stretch at 79–174 (RQLAVVEMPA…KVSRLARGVP (96 aa)) folds into the Toprim domain.

The protein belongs to the RecR family.

May play a role in DNA repair. It seems to be involved in an RecBC-independent recombinational process of DNA repair. It may act with RecF and RecO. This Thiobacillus denitrificans (strain ATCC 25259 / T1) protein is Recombination protein RecR.